The chain runs to 474 residues: UDP-N-acetylmuramoylalanine--D-glutamate ligase (474 aa).

134 to 140 serves as a coordination point for ATP; that stretch reads GSNGKST.

This sequence belongs to the MurCDEF family.

Its subcellular location is the cytoplasm. The enzyme catalyses UDP-N-acetyl-alpha-D-muramoyl-L-alanine + D-glutamate + ATP = UDP-N-acetyl-alpha-D-muramoyl-L-alanyl-D-glutamate + ADP + phosphate + H(+). The protein operates within cell wall biogenesis; peptidoglycan biosynthesis. Functionally, cell wall formation. Catalyzes the addition of glutamate to the nucleotide precursor UDP-N-acetylmuramoyl-L-alanine (UMA). The sequence is that of UDP-N-acetylmuramoylalanine--D-glutamate ligase from Thiobacillus denitrificans (strain ATCC 25259 / T1).